An 86-amino-acid chain; its full sequence is Acyl carrier protein (86 aa).

The Carrier domain maps to 7–85 (SKVDNIEQKV…DVVNYIKEHK (79 aa)). Ser-45 is modified (O-(pantetheine 4'-phosphoryl)serine).

This sequence belongs to the acyl carrier protein (ACP) family. In terms of processing, 4'-phosphopantetheine is transferred from CoA to a specific serine of apo-ACP by AcpS. This modification is essential for activity because fatty acids are bound in thioester linkage to the sulfhydryl of the prosthetic group.

It localises to the cytoplasm. It participates in lipid metabolism; fatty acid biosynthesis. In terms of biological role, carrier of the growing fatty acid chain in fatty acid biosynthesis. The chain is Acyl carrier protein from Rickettsia bellii (strain RML369-C).